We begin with the raw amino-acid sequence, 256 residues long: Fat body protein 2 (256 aa).

10–34 (VYVGSFSGIGWQMMMQLMQKDIKMM) is a binding site for NAD(+). S138 contacts substrate. Y151 functions as the Proton acceptor in the catalytic mechanism.

Belongs to the short-chain dehydrogenases/reductases (SDR) family.

This is Fat body protein 2 (Fbp2) from Drosophila melanogaster (Fruit fly).